A 109-amino-acid chain; its full sequence is uncharacterized protein (109 aa).

To M.jannaschii MJ1244 and MJ1245 and M.thermoautotrophicum MTH1110.

This is an uncharacterized protein from Methanococcus maripaludis (Methanococcus deltae).